A 188-amino-acid polypeptide reads, in one-letter code: MPVADTSQLTSGVAERYASSLFELALEQGAVDSVTADLDHFQAMLDESADLKRFVASPVFSAEDQLKAIVAISEKAGISGFFANFLKVVARNRRLFALPGMIKAFRIIAANHRGEISAEVTSAHALSQAQETELKVALKGVTGKDVTIAVTVDPSILGGLIVKVGSRQIDTSLRTKLSTLKLALKEVG.

The protein belongs to the ATPase delta chain family. In terms of assembly, F-type ATPases have 2 components, F(1) - the catalytic core - and F(0) - the membrane proton channel. F(1) has five subunits: alpha(3), beta(3), gamma(1), delta(1), epsilon(1). F(0) has three main subunits: a(1), b(2) and c(10-14). The alpha and beta chains form an alternating ring which encloses part of the gamma chain. F(1) is attached to F(0) by a central stalk formed by the gamma and epsilon chains, while a peripheral stalk is formed by the delta and b chains.

It localises to the cell inner membrane. F(1)F(0) ATP synthase produces ATP from ADP in the presence of a proton or sodium gradient. F-type ATPases consist of two structural domains, F(1) containing the extramembraneous catalytic core and F(0) containing the membrane proton channel, linked together by a central stalk and a peripheral stalk. During catalysis, ATP synthesis in the catalytic domain of F(1) is coupled via a rotary mechanism of the central stalk subunits to proton translocation. Its function is as follows. This protein is part of the stalk that links CF(0) to CF(1). It either transmits conformational changes from CF(0) to CF(1) or is implicated in proton conduction. This chain is ATP synthase subunit delta, found in Rhizobium johnstonii (strain DSM 114642 / LMG 32736 / 3841) (Rhizobium leguminosarum bv. viciae).